The sequence spans 1171 residues: ATP-dependent helicase/deoxyribonuclease subunit B (1171 aa).

The 390-residue stretch at 1–390 (MSLRFVIGRA…HPLVECIRSA (390 aa)) folds into the UvrD-like helicase ATP-binding domain. 8-15 (GRAGSGKS) contributes to the ATP binding site. Residues 281 to 587 (MEQPRFHSPA…QFANIPPSLD (307 aa)) form the UvrD-like helicase C-terminal domain. Positions 805, 1129, 1132, and 1138 each coordinate [4Fe-4S] cluster.

The protein belongs to the helicase family. AddB/RexB type 1 subfamily. Heterodimer of AddA and AddB. It depends on Mg(2+) as a cofactor. [4Fe-4S] cluster is required as a cofactor.

Its function is as follows. The heterodimer acts as both an ATP-dependent DNA helicase and an ATP-dependent, dual-direction single-stranded exonuclease. Recognizes the chi site generating a DNA molecule suitable for the initiation of homologous recombination. The AddB subunit has 5' -&gt; 3' nuclease activity but not helicase activity. The sequence is that of ATP-dependent helicase/deoxyribonuclease subunit B from Bacillus cereus (strain ZK / E33L).